The chain runs to 403 residues: Acetate kinase (403 aa).

Asn-13 is a binding site for Mg(2+). Lys-20 serves as a coordination point for ATP. Residue Arg-94 participates in substrate binding. Asp-153 (proton donor/acceptor) is an active-site residue. ATP is bound by residues 213 to 217, 288 to 290, and 336 to 340; these read HLGNG, DFR, and GIGEN. Residue Glu-390 participates in Mg(2+) binding.

This sequence belongs to the acetokinase family. As to quaternary structure, homodimer. Requires Mg(2+) as cofactor. It depends on Mn(2+) as a cofactor.

Its subcellular location is the cytoplasm. It carries out the reaction acetate + ATP = acetyl phosphate + ADP. Its pathway is metabolic intermediate biosynthesis; acetyl-CoA biosynthesis; acetyl-CoA from acetate: step 1/2. Functionally, catalyzes the formation of acetyl phosphate from acetate and ATP. Can also catalyze the reverse reaction. The chain is Acetate kinase from Buchnera aphidicola subsp. Schizaphis graminum (strain Sg).